Here is a 212-residue protein sequence, read N- to C-terminus: Leucyl/phenylalanyl-tRNA--protein transferase (212 aa).

Belongs to the L/F-transferase family.

Its subcellular location is the cytoplasm. The enzyme catalyses N-terminal L-lysyl-[protein] + L-leucyl-tRNA(Leu) = N-terminal L-leucyl-L-lysyl-[protein] + tRNA(Leu) + H(+). It catalyses the reaction N-terminal L-arginyl-[protein] + L-leucyl-tRNA(Leu) = N-terminal L-leucyl-L-arginyl-[protein] + tRNA(Leu) + H(+). The catalysed reaction is L-phenylalanyl-tRNA(Phe) + an N-terminal L-alpha-aminoacyl-[protein] = an N-terminal L-phenylalanyl-L-alpha-aminoacyl-[protein] + tRNA(Phe). Functions in the N-end rule pathway of protein degradation where it conjugates Leu, Phe and, less efficiently, Met from aminoacyl-tRNAs to the N-termini of proteins containing an N-terminal arginine or lysine. The protein is Leucyl/phenylalanyl-tRNA--protein transferase of Christiangramia forsetii (strain DSM 17595 / CGMCC 1.15422 / KT0803) (Gramella forsetii).